Consider the following 1202-residue polypeptide: Nucleolar protein 6 (1202 aa).

Positions 1 to 64 (MNKTKRKQQS…KKYKDNETNK (64 aa)) are disordered.

This sequence belongs to the NRAP family. In terms of assembly, part of the small subunit (SSU) processome, composed of more than 70 proteins and the RNA chaperone small nucleolar RNA (snoRNA) U3.

Its subcellular location is the nucleus. It localises to the nucleolus. The protein localises to the chromosome. Functionally, part of the small subunit (SSU) processome, first precursor of the small eukaryotic ribosomal subunit. During the assembly of the SSU processome in the nucleolus, many ribosome biogenesis factors, an RNA chaperone and ribosomal proteins associate with the nascent pre-rRNA and work in concert to generate RNA folding, modifications, rearrangements and cleavage as well as targeted degradation of pre-ribosomal RNA by the RNA exosome. The chain is Nucleolar protein 6 from Drosophila willistoni (Fruit fly).